The sequence spans 305 residues: Protoheme IX farnesyltransferase 1 (305 aa).

Transmembrane regions (helical) follow at residues 22 to 42, 53 to 73, 94 to 114, 115 to 135, 154 to 174, 179 to 199, 230 to 250, and 283 to 303; these read IKTG…TLAL, IPEI…AGAF, VTGD…TIFG, LVFL…GLFL, IGSV…YPDV, IIGL…AIAI, LVIL…LMLV, and LFHM…GIFF.

The protein belongs to the UbiA prenyltransferase family. Protoheme IX farnesyltransferase subfamily. As to quaternary structure, interacts with CtaA.

It localises to the cell membrane. The enzyme catalyses heme b + (2E,6E)-farnesyl diphosphate + H2O = Fe(II)-heme o + diphosphate. Its pathway is porphyrin-containing compound metabolism; heme O biosynthesis; heme O from protoheme: step 1/1. In terms of biological role, converts heme B (protoheme IX) to heme O by substitution of the vinyl group on carbon 2 of heme B porphyrin ring with a hydroxyethyl farnesyl side group. This chain is Protoheme IX farnesyltransferase 1, found in Bacillus cytotoxicus (strain DSM 22905 / CIP 110041 / 391-98 / NVH 391-98).